A 607-amino-acid chain; its full sequence is Guanine nucleotide-binding protein-like 1 (607 aa).

Over residues 1 to 14 (MPRKKPFSVKQKKK) the composition is skewed to basic residues. A disordered region spans residues 1–81 (MPRKKPFSVK…GPRGYDPNRY (81 aa)). The segment covering 15-26 (QLQDKRERKRGL) has biased composition (basic and acidic residues). 3 positions are modified to phosphoserine: S32, S33, and S34. A phosphothreonine mark is found at T48 and T50. A phosphoserine mark is found at S51 and S68. One can recognise a CP-type G domain in the interval 178–418 (WRQLWRVLEM…LCDCPGLIFP (241 aa)). A GTP-binding site is contributed by 225 to 228 (NKVD). Phosphoserine is present on S324. Residues 367 to 374 (GFPNVGKS) and 411 to 415 (DCPGL) contribute to the GTP site. The tract at residues 547–607 (GPAGDEEEEE…PYALLGEDEC (61 aa)) is disordered. Residues 550-584 (GDEEEEEEEELSSSCEEEGEEDRDADEEGEGDEET) show a composition bias toward acidic residues. Residues S561, S562, and S563 each carry the phosphoserine modification.

This sequence belongs to the TRAFAC class YlqF/YawG GTPase family.

Functionally, possible regulatory or functional link with the histocompatibility cluster. In Pan troglodytes (Chimpanzee), this protein is Guanine nucleotide-binding protein-like 1 (GNL1).